The chain runs to 71 residues: Putative defensin-like protein 303 (71 aa).

The N-terminal stretch at 1-25 (MKSNKATFFLGLLLVYAFCIMLIES) is a signal peptide. 3 disulfides stabilise this stretch: Cys27–Cys45, Cys33–Cys50, and Cys39–Cys52.

The protein belongs to the DEFL family.

The protein resides in the secreted. This is Putative defensin-like protein 303 from Arabidopsis thaliana (Mouse-ear cress).